The primary structure comprises 311 residues: Pyrimidine-specific ribonucleoside hydrolase RihA (311 aa).

Residue H240 is part of the active site.

Belongs to the IUNH family. RihA subfamily.

Its function is as follows. Hydrolyzes cytidine or uridine to ribose and cytosine or uracil, respectively. This chain is Pyrimidine-specific ribonucleoside hydrolase RihA, found in Salmonella paratyphi A (strain ATCC 9150 / SARB42).